A 163-amino-acid polypeptide reads, in one-letter code: Meiotically up-regulated gene 109 protein (163 aa).

A run of 4 helical transmembrane segments spans residues 61–78, 82–104, 114–134, and 136–156; these read YRFY…FFIW, ALLA…SLTI, YSIP…APVG, and LFWS…LTTY.

Its subcellular location is the membrane. In terms of biological role, has a role in meiosis. This is Meiotically up-regulated gene 109 protein (mug109) from Schizosaccharomyces pombe (strain 972 / ATCC 24843) (Fission yeast).